A 336-amino-acid polypeptide reads, in one-letter code: Phospho-N-acetylmuramoyl-pentapeptide-transferase (336 aa).

The next 10 membrane-spanning stretches (helical) occupy residues 3 to 23 (LTLI…PYFI), 53 to 73 (GGTV…LFSI), 78 to 98 (SLAL…IGFL), 118 to 138 (LALQ…PSGI), 143 to 163 (VFGY…FWVV), 174 to 194 (GIDG…GVIA), 200 to 220 (FDVL…FCFN), 226 to 246 (VFMG…ISIA), 251 to 271 (WTLL…MLQV), and 316 to 336 (AFLW…LYVF).

It belongs to the glycosyltransferase 4 family. MraY subfamily. It depends on Mg(2+) as a cofactor.

Its subcellular location is the cell membrane. The catalysed reaction is UDP-N-acetyl-alpha-D-muramoyl-L-alanyl-gamma-D-glutamyl-L-lysyl-D-alanyl-D-alanine + di-trans,octa-cis-undecaprenyl phosphate = Mur2Ac(oyl-L-Ala-gamma-D-Glu-L-Lys-D-Ala-D-Ala)-di-trans,octa-cis-undecaprenyl diphosphate + UMP. It functions in the pathway cell wall biogenesis; peptidoglycan biosynthesis. Catalyzes the initial step of the lipid cycle reactions in the biosynthesis of the cell wall peptidoglycan: transfers peptidoglycan precursor phospho-MurNAc-pentapeptide from UDP-MurNAc-pentapeptide onto the lipid carrier undecaprenyl phosphate, yielding undecaprenyl-pyrophosphoryl-MurNAc-pentapeptide, known as lipid I. This is Phospho-N-acetylmuramoyl-pentapeptide-transferase from Streptococcus pyogenes serotype M1.